Consider the following 348-residue polypeptide: Protein DMR6-LIKE OXYGENASE 2 (348 aa).

One can recognise a Fe2OG dioxygenase domain in the interval 194 to 294; it reads KHGQHMAINY…RISIPTFYCP (101 aa). His219, Asp221, and His275 together coordinate Fe cation. Position 285 (Arg285) interacts with 2-oxoglutarate.

The protein belongs to the iron/ascorbate-dependent oxidoreductase family. Requires Fe(2+) as cofactor.

It catalyses the reaction salicylate + NADH + O2 + H(+) = 2,3-dihydroxybenzoate + NAD(+) + H2O. In terms of biological role, converts salicylic acid (SA) to 2,3-dihydroxybenzoic acid (2,3-DHBA). Negative regulator of defense against Hyaloperonospora arabidopsidis. Functionally, (Microbial infection) Confers susceptibility to the downy mildew pathogen Hyaloperonospora arabidopsidis. This is Protein DMR6-LIKE OXYGENASE 2 from Arabidopsis thaliana (Mouse-ear cress).